Consider the following 237-residue polypeptide: Chaplin-B (237 aa).

Residues 1–26 form the signal peptide; it reads MRRVTRNGVLAVAASGALAVTMPAYA. One can recognise a Chaplin 1 domain in the interval 42–82; that stretch reads SPGLISGNTVQLPVDVPVDVCGNTVNVVGLLNPAAGNGCAD. Disordered stretches follow at residues 81-127 and 148-216; these read ADSG…LSGN and GIGN…TLAG. Residues 101–115 show a composition bias toward low complexity; the sequence is GSATEATSGGAAAEG. The region spanning 120 to 160 is the Chaplin 2 domain; it reads SPGVLSGNGVQLPVHLPVNVSGNSVNVVGIGNPAVGNESTN. A compositionally biased stretch (pro residues) spans 169–178; it reads VRPPAEPEPS. The short motif at 202–206 is the LPXTG sorting signal element; the sequence is LAHTG. Position 205 is a pentaglycyl murein peptidoglycan amidated threonine (Thr205). The propeptide at 206-237 is removed by sortase; it reads GTDRTLPTLAGGAALVLGGTVLYRRFRPGSGD.

The protein belongs to the chaplin family. Long chaplin subfamily.

It localises to the secreted. It is found in the cell wall. Its function is as follows. One of 8 partially redundant surface-active proteins required for efficient formation of aerial mycelium; the short chaplins assemble into a hydrophobic, amyloidal fibrillar surface layer that envelopes and protects aerial hyphae and spores, presumably anchored to the long chaplins. Chaplins have an overlapping function with the surface-active SapB peptide; chaplins are essential on minimal medium while on rich medium both chaplins and SapB are required for efficient aerial hyphae formation. The long chaplins (ChpA, ChpB, ChpC) are not absolutely necessary for short chaplin localization or rodlet formation, but probably play a role in initiating aerial hyphae development. Chaplins are also involved in cell attachment to a hydrophobic surface. In Streptomyces coelicolor (strain ATCC BAA-471 / A3(2) / M145), this protein is Chaplin-B.